The chain runs to 60 residues: Large ribosomal subunit protein uL30 (60 aa).

Belongs to the universal ribosomal protein uL30 family. In terms of assembly, part of the 50S ribosomal subunit.

The protein is Large ribosomal subunit protein uL30 of Staphylococcus epidermidis (strain ATCC 35984 / DSM 28319 / BCRC 17069 / CCUG 31568 / BM 3577 / RP62A).